The sequence spans 567 residues: Proline--tRNA ligase (567 aa).

Belongs to the class-II aminoacyl-tRNA synthetase family. ProS type 1 subfamily. In terms of assembly, homodimer.

It localises to the cytoplasm. It carries out the reaction tRNA(Pro) + L-proline + ATP = L-prolyl-tRNA(Pro) + AMP + diphosphate. Its function is as follows. Catalyzes the attachment of proline to tRNA(Pro) in a two-step reaction: proline is first activated by ATP to form Pro-AMP and then transferred to the acceptor end of tRNA(Pro). As ProRS can inadvertently accommodate and process non-cognate amino acids such as alanine and cysteine, to avoid such errors it has two additional distinct editing activities against alanine. One activity is designated as 'pretransfer' editing and involves the tRNA(Pro)-independent hydrolysis of activated Ala-AMP. The other activity is designated 'posttransfer' editing and involves deacylation of mischarged Ala-tRNA(Pro). The misacylated Cys-tRNA(Pro) is not edited by ProRS. This chain is Proline--tRNA ligase, found in Streptomyces coelicolor (strain ATCC BAA-471 / A3(2) / M145).